An 824-amino-acid polypeptide reads, in one-letter code: FT-interacting protein 1 (824 aa).

C2 domains follow at residues 48–170, 217–341, and 385–522; these read WLGL…PQWY, VRGE…SRWF, and YISD…THAY. The next 3 helical transmembrane spans lie at 625–645, 657–677, and 764–784; these read AVSL…VCHW, LLLI…LYMF, and ATCL…VTPF.

The protein belongs to the MCTP family. In terms of assembly, interacts with RFT1 and PI4KG4. As to expression, specifically expressed in the phloem including companion cells.

The protein localises to the endoplasmic reticulum membrane. Its function is as follows. Involved in the export of the long day-specific flower-promoting signal (florigen) RFT1 from the phloem companion cells to sieve elements. Promotes flowering under long days through the transport of RFT1 from the leaves to the shoot apical meristem (SAM). This chain is FT-interacting protein 1, found in Oryza sativa subsp. japonica (Rice).